A 345-amino-acid chain; its full sequence is MLLLGLLLLTSALAGRRHGAAAESDLSSKFSFPGAKEQNGVQDPQHEKIITVTSNGSIHSPKFPHTYPRNTVLVWRLVAVDENVWIQLTFDERFGLEDPEDDICKYDFVEVEEPSDGTVLGRWCGSSSVPSRQISKGNQIRIRFVSDEYFPSQPGFCIHYTLLVPHHTEAPSPSSLPPSALPLDVLNNAVAGFSTVEELIRYLEPDRWQLDLEDLYRPTWQLLGKAYIHGRKSRVVDLNLLKEEVRLYSCTPRNFSVSLREELKRTDTIFWPLCLLVKRCGGNCACCHQNCNECQCIPTKVTKKYHEVLQLKPRSGVRGLHKSLTDVPLEHHEECDCVCKGNSEG.

The signal sequence occupies residues 1–22 (MLLLGLLLLTSALAGRRHGAAA). Positions 46-163 (HEKIITVTSN…PGFCIHYTLL (118 aa)) constitute a CUB domain. Asparagine 55 is a glycosylation site (N-linked (GlcNAc...) asparagine). Cystine bridges form between cysteine 104–cysteine 124, cysteine 250–cysteine 294, cysteine 280–cysteine 335, and cysteine 287–cysteine 337.

This sequence belongs to the PDGF/VEGF growth factor family. As to quaternary structure, homodimer; disulfide-linked. Interacts with PDGFRA homodimers, and with heterodimers formed by PDGFRA and PDGFRB. Post-translationally, proteolytic removal of the N-terminal CUB domain releasing the core domain is necessary for unmasking the receptor-binding epitopes of the core domain. Cleavage after basic residues in the hinge region (region connecting the CUB and growth factor domains) gives rise to the receptor-binding form.

It localises to the secreted. Functionally, growth factor that plays an essential role in the regulation of embryonic development, cell proliferation, cell migration, survival and chemotaxis. Potent mitogen and chemoattractant for cells of mesenchymal origin. Required for normal skeleton formation during embryonic development. Required for normal skin morphogenesis during embryonic development. Plays an important role in wound healing, in angiogenesis and blood vessel development. The polypeptide is Platelet-derived growth factor C (PDGFC) (Gallus gallus (Chicken)).